We begin with the raw amino-acid sequence, 511 residues long: MSKRPVALIILDGFALREETYGNAVAQANKPNFDRYWNEYPHATLKACGEAVGLPEGQMGNSEVGHLNIGAGRIVYQSLTRVNIAIREGEFDRNETFLAAMNHVKQHGTSLHLFGLLSDGGVHSHIHHLYALLRLAAKEGVKRVYIHGFLDGRDVGPQTAPQYIKELQEKIKEYGVGEIATLSGRYYSMDRDKRWERVEKAYRAMVYGEGPTYRDPLECIEDSYKNGIYDEFVLPSVIVREDGSPVATIQDNDAIIFYNFRPDRAIQISNTFTNEDFREFDRGPKHPKNLFFVCLTHFSETVKGYVAFKPTNLDNTIGEVLSQHGLRQLRIAETEKYPHVTFFMSGGREEKFPGEDRILINSPKVATYDLKPEMSAYEVTEALLKEIAADKYDAIILNYANPDMVGHSGMLEPTIKAVEAVDECLGKVVDAILEKGGIAIITADHGNADEVLTPEGKPQTAHTTNPVPVIVTKHGIELRKDGILGDLAPTMLDLLGLPQPKEMTGKTLIVK.

Aspartate 12 is a binding site for Mn(2+). At tyrosine 36 the chain carries Phosphotyrosine. Serine 62 contributes to the Mn(2+) binding site. Residue serine 62 is the Phosphoserine intermediate of the active site. Residues histidine 123, 153–154, arginine 185, arginine 191, 261–264, and lysine 336 contribute to the substrate site; these read RD and RPDR. Residues aspartate 403, histidine 407, aspartate 444, histidine 445, and histidine 462 each contribute to the Mn(2+) site.

It belongs to the BPG-independent phosphoglycerate mutase family. In terms of assembly, monomer. The cofactor is Mn(2+).

The catalysed reaction is (2R)-2-phosphoglycerate = (2R)-3-phosphoglycerate. Its pathway is carbohydrate degradation; glycolysis; pyruvate from D-glyceraldehyde 3-phosphate: step 3/5. Its function is as follows. Catalyzes the interconversion of 2-phosphoglycerate and 3-phosphoglycerate. In Geobacillus thermodenitrificans (strain NG80-2), this protein is 2,3-bisphosphoglycerate-independent phosphoglycerate mutase.